A 234-amino-acid chain; its full sequence is tRNA (guanine-N(1)-)-methyltransferase (234 aa).

S-adenosyl-L-methionine contacts are provided by residues Gly112 and Ile132–Leu137.

This sequence belongs to the RNA methyltransferase TrmD family. As to quaternary structure, homodimer.

The protein resides in the cytoplasm. The catalysed reaction is guanosine(37) in tRNA + S-adenosyl-L-methionine = N(1)-methylguanosine(37) in tRNA + S-adenosyl-L-homocysteine + H(+). Specifically methylates guanosine-37 in various tRNAs. This is tRNA (guanine-N(1)-)-methyltransferase from Campylobacter jejuni subsp. jejuni serotype O:6 (strain 81116 / NCTC 11828).